A 356-amino-acid chain; its full sequence is Icosanoyl-CoA 5-desaturase (356 aa).

Residues 5–25 (LYFPISISLSLSLEAMASFIA) traverse the membrane as a helical segment. Residues 38-58 (LDPKIPTKPEPKTETPKPKDD) are disordered. Basic and acidic residues predominate over residues 42–58 (IPTKPEPKTETPKPKDD). Transmembrane regions (helical) follow at residues 88–108 (NAVT…YFSW) and 111–131 (FWIS…TLCF). Residues 132–137 (HRCLTH) carry the Histidine box-1 motif. A Histidine box-2 motif is present at residues 169 to 173 (HRYHH). A helical transmembrane segment spans residues 236–256 (ALIALLYYVGGFPYIVWGMGF). The short motif at 302-306 (HNNHH) is the Histidine box-3 element.

Belongs to the fatty acid desaturase type 1 family. Fe(2+) serves as cofactor.

The protein localises to the membrane. The catalysed reaction is eicosanoyl-CoA + 2 Fe(II)-[cytochrome b5] + O2 + 2 H(+) = (5Z)-eicosenoyl-CoA + 2 Fe(III)-[cytochrome b5] + 2 H2O. The protein operates within lipid metabolism; monounsaturated fatty acid biosynthesis. Functionally, desaturase involved in the biosynthesis of (5Z)-icos-5-enoate, an unusual monounsaturated fatty acid that makes up to 60% of the total fatty acids in Limnanthes sp. seed oil. Only acts on saturated fatty acids. In Limnanthes douglasii (Douglas' meadowfoam), this protein is Icosanoyl-CoA 5-desaturase.